A 95-amino-acid chain; its full sequence is Integration host factor subunit beta (95 aa).

This sequence belongs to the bacterial histone-like protein family. Heterodimer of an alpha and a beta chain.

In terms of biological role, this protein is one of the two subunits of integration host factor, a specific DNA-binding protein that functions in genetic recombination as well as in transcriptional and translational control. The polypeptide is Integration host factor subunit beta (Shewanella amazonensis (strain ATCC BAA-1098 / SB2B)).